Here is a 405-residue protein sequence, read N- to C-terminus: Prenyltransferase phqA (405 aa).

Dimethylallyl diphosphate-binding residues include Tyr195, Lys262, and Gln332.

It belongs to the tryptophan dimethylallyltransferase family.

The protein operates within alkaloid biosynthesis. Prenyltransferase; part of the gene cluster that mediates the biosynthesis of paraherquamide, a fungal indole alkaloid that belongs to a family of natural products containing a characteristic bicyclo[2.2.2]diazaoctane core. The first steps in the biosynthesis of paraherquamide is the production of the beta-methyl-proline precursor from L-isoleucine. They require oxidation of a terminally hydroxylated L-isoleucine to the corresponding aldehyde by enzymes which have still to be identified. Spontaneous cyclization and dehydration would yield the 4-methyl pyrolline-5-carboxylic acid, which is then reduced by the pyrroline-5-carboxylate reductase phqD leading to the beta-methyl-proline precursor. The next step of paraherquamide biosynthesis involves coupling of beta-methyl-proline and L-tryptophan by the bimodular NRPS phqB, to produce a monooxopiperazine intermediate. The reductase (R) domain of phqB utilizes NADPH for hydride transfer to reduce the thioester bond of the T domain-tethered linear dipeptide to a hemithioaminal intermediate, which spontaneously cleaves the C-S bond to release the aldehyde product. This compound undergoes spontaneous cyclization and dehydration to give a dienamine which is reverse prenylated at C-2 by the reverse prenyltransferase phqJ. The other prenyltransferase present in the cluster, phqI may be a redundant gene in the pathway. During biosynthetic assembly, the key step to produce the polycyclic core is catalyzed by the bifunctional reductase and intramolecular [4+2] Diels-Alderase, phqE, resulting in formation of the [2.2.2] diazaoctane intermediate preparaherquamide. Following formation of preparaherquamide, an indole 2,3-epoxidation-initiated pinacol-like rearrangement is catalyzed by the phqK FAD-dependent monooxygenase. The prenyltransferase phqA, the cytochrome P450 monooxygenase phqL, and the FAD-linked oxidoreductase phqH (or the cytochrome P450 monooxygenase phqM), are proposed to be involved in the formation of the pyran ring. The FAD-dependent monooxygenase phqK is likely responsible for generation of the spiro-oxindole, and the N-methylation is likely mediated by the phqN methyltransferase leading to the isolable natural product paraherquamide F. However, the order of these biosynthetic steps has still to be determined. In late-stage paraherquamide biosynthesis, the third P450 monooxygenase, phqO, is probably responsible for the C-14 hydroxylation, transforming paraherquamide F to paraherquamide G, and paraherquamide E to the final product paraherquamide A. The expansion from the 6-membered ring pyran (in paraherquamides F and G) to the 7-membered dioxepin ring (in paraherquamides A and E) represents a poorly understood but intriguing process that probably involves the 2-oxoglutarate-dependent dioxygenase phqC. Finally, the remaining members of the paraherquamide cluster, including phqI as well as phqM (or phqH), do not have a clearly prescribed role and appear to be redundant. The chain is Prenyltransferase phqA from Penicillium fellutanum.